Consider the following 271-residue polypeptide: 3-methyl-2-oxobutanoate hydroxymethyltransferase (271 aa).

Aspartate 51 and aspartate 90 together coordinate Mg(2+). Residues 51–52 (DS), aspartate 90, and lysine 118 contribute to the 3-methyl-2-oxobutanoate site. Glutamate 120 lines the Mg(2+) pocket. The active-site Proton acceptor is the glutamate 186.

Belongs to the PanB family. As to quaternary structure, homodecamer; pentamer of dimers. Requires Mg(2+) as cofactor.

The protein localises to the cytoplasm. The catalysed reaction is 3-methyl-2-oxobutanoate + (6R)-5,10-methylene-5,6,7,8-tetrahydrofolate + H2O = 2-dehydropantoate + (6S)-5,6,7,8-tetrahydrofolate. It functions in the pathway cofactor biosynthesis; (R)-pantothenate biosynthesis; (R)-pantoate from 3-methyl-2-oxobutanoate: step 1/2. Functionally, catalyzes the reversible reaction in which hydroxymethyl group from 5,10-methylenetetrahydrofolate is transferred onto alpha-ketoisovalerate to form ketopantoate. The polypeptide is 3-methyl-2-oxobutanoate hydroxymethyltransferase (Xanthomonas campestris pv. campestris (strain B100)).